The sequence spans 416 residues: Caspase-9 (416 aa).

A CARD domain is found at 1–92; the sequence is MDEADRRLLR…DMLASFLRTN (92 aa). Position 125 is a phosphothreonine; by MAPK1 (Thr-125). Residue Tyr-153 is modified to Phosphotyrosine; by ABL1. Active-site residues include His-237 and Cys-287. Positions 294 to 320 are disordered; it reads HGFEVASTSPEDESPGSNPEPDATPFQ. Residues Ser-302, Ser-307, and Ser-310 each carry the phosphoserine modification. Positions 316 to 330 are excised as a propeptide; that stretch reads ATPFQEGLRTFDQLD. Arg-355 is modified ((Microbial infection) ADP-riboxanated arginine).

This sequence belongs to the peptidase C14A family. As to quaternary structure, heterotetramer that consists of two anti-parallel arranged heterodimers, each one formed by a 35 kDa (p35) and a 10 kDa (p10) subunit. Caspase-9 and APAF1 bind to each other via their respective NH2-terminal CED-3 homologous domains in the presence of cytochrome C and ATP. Interacts (inactive form) with EFHD2. Interacts with HAX1. Interacts with BIRC2/c-IAP1, XIAP/BIRC4, BIRC5/survivin, BIRC6/bruce and BIRC7/livin. Interacts with ABL1 (via SH3 domain); the interaction is direct and increases in the response of cells to genotoxic stress and ABL1/c-Abl activation. Interacts with BCL2L10. Interacts with NleF from pathogenic E.coli. Post-translationally, cleavages at Asp-315 by granzyme B and at Asp-330 by caspase-3 generate the two active subunits. Caspase-8 and -10 can also be involved in these processing events. Phosphorylated at Thr-125 by MAPK1/ERK2. Phosphorylation at Thr-125 is sufficient to block caspase-9 processing and subsequent caspase-3 activation. Phosphorylation on Tyr-153 by ABL1/c-Abl; occurs in the response of cells to DNA damage. In terms of processing, (Microbial infection) ADP-riboxanation by C.violaceum CopC blocks CASP9 processing, preventing CASP9 activation and ability to mediate intrinsic apoptosis. Post-translationally, ubiquitinated by BIRC6; this activity is inhibited by DIABLO/SMAC. Ubiquitous, with highest expression in the heart, moderate expression in liver, skeletal muscle, and pancreas. Low levels in all other tissues. Within the heart, specifically expressed in myocytes.

It catalyses the reaction Strict requirement for an Asp residue at position P1 and with a marked preference for His at position P2. It has a preferred cleavage sequence of Leu-Gly-His-Asp-|-Xaa.. Inhibited by the effector protein NleF that is produced by pathogenic E.coli; this inhibits apoptosis. Inhibited by BIRC6; following inhibition of BIRC6-caspase binding by DIABLO/SMAC, BIRC6 is subjected to caspase cleavage, leading to an increase in active caspases. Functionally, involved in the activation cascade of caspases responsible for apoptosis execution. Binding of caspase-9 to Apaf-1 leads to activation of the protease which then cleaves and activates effector caspases caspase-3 (CASP3) or caspase-7 (CASP7). Promotes DNA damage-induced apoptosis in a ABL1/c-Abl-dependent manner. Proteolytically cleaves poly(ADP-ribose) polymerase (PARP). Cleaves BIRC6 following inhibition of BIRC6-caspase binding by DIABLO/SMAC. Its function is as follows. Lacks activity is an dominant-negative inhibitor of caspase-9. This chain is Caspase-9 (CASP9), found in Homo sapiens (Human).